The chain runs to 313 residues: D-alanine--D-alanine ligase (313 aa).

The 196-residue stretch at 114 to 309 folds into the ATP-grasp domain; that stretch reads KWLWKGVGLP…FSKLVLKLIS (196 aa). 142–195 is an ATP binding site; it reads DLTFPVIVKPSHEGSSIGMRKVDTLDALQEAVDFAQQYDSEILIEQWITGREFT. Positions 263, 276, and 278 each coordinate Mg(2+).

The protein belongs to the D-alanine--D-alanine ligase family. The cofactor is Mg(2+). Mn(2+) is required as a cofactor.

It localises to the cytoplasm. The enzyme catalyses 2 D-alanine + ATP = D-alanyl-D-alanine + ADP + phosphate + H(+). The protein operates within cell wall biogenesis; peptidoglycan biosynthesis. In terms of biological role, cell wall formation. In Hydrogenovibrio crunogenus (strain DSM 25203 / XCL-2) (Thiomicrospira crunogena), this protein is D-alanine--D-alanine ligase.